A 260-amino-acid chain; its full sequence is Snake venom serine protease homolog (260 aa).

The signal sequence occupies residues 1 to 18 (MVLVRVLANLLMLQLSYA). A propeptide spanning residues 19–24 (QKSSEL) is cleaved from the precursor. A Peptidase S1 domain is found at 25–251 (IIGGDECNIN…HLDWIKSIIA (227 aa)). Cystine bridges form between Cys-31–Cys-165, Cys-52–Cys-68, Cys-100–Cys-258, Cys-144–Cys-212, Cys-176–Cys-191, and Cys-202–Cys-227. Asp-112 functions as the Charge relay system in the catalytic mechanism. Residues Asn-123 and Asn-124 are each glycosylated (N-linked (GlcNAc...) asparagine). The Charge relay system role is filled by Ser-206.

Belongs to the peptidase S1 family. Snake venom subfamily. In terms of tissue distribution, expressed by the venom gland.

It is found in the secreted. Snake venom serine protease homolog. May act in the hemostasis system of the prey. This chain is Snake venom serine protease homolog, found in Protobothrops jerdonii (Jerdon's pitviper).